The primary structure comprises 366 residues: Neuropeptide Y receptor type 1 (366 aa).

Over 1 to 39 the chain is Extracellular; sequence MNFSTYFENLSVPNNISGNITFPISEDCALPLPMIFTLA. Residues N2, N9, and N15 are each glycosylated (N-linked (GlcNAc...) asparagine). The chain crosses the membrane as a helical span at residues 40–60; the sequence is LAYGAVIILGLSGNLALIIII. Over 61 to 82 the chain is Cytoplasmic; the sequence is LKQKEMRNVTNILIVNLSFSDL. Residues 83-103 traverse the membrane as a helical segment; that stretch reads LATIMCLPFTLIYTLMDHWIF. Over 104-111 the chain is Extracellular; the sequence is GEVMCKLN. C108 and C193 form a disulfide bridge. A helical transmembrane segment spans residues 112–132; that stretch reads EYIQCVSVTVSIFSLVLIAIE. The Cytoplasmic portion of the chain corresponds to 133-149; the sequence is RHQLIINPRGWRPNNRH. A helical membrane pass occupies residues 150 to 170; the sequence is ACFGITVIWGFAMACSTPLMM. Over 171-203 the chain is Extracellular; it reads YSVLTDEPFKNISLDSYIGKYVCLEDFPEDKFR. N181 carries N-linked (GlcNAc...) asparagine glycosylation. The chain crosses the membrane as a helical span at residues 204–224; it reads LSYTTLLFILQYLGPLCFIFV. At 225-260 the chain is on the cytoplasmic side; the sequence is CYTKIFLRLKRRNNMMDKIRDNKYRSSETKRINIML. A helical membrane pass occupies residues 261–281; that stretch reads LSIVVGFALCWLPFFIFNLVF. Residues 282 to 294 are Extracellular-facing; that stretch reads DWNHEAVATCNHN. The chain crosses the membrane as a helical span at residues 295–315; sequence LLFLICHLTAMISTCVNPIFY. Residues 316–366 are Cytoplasmic-facing; it reads GFLNKNFQRDLQFFFNFCDFRSREDDYETIAMSTMHTDVSKTSLKQASPIA. C333 is lipidated: S-palmitoyl cysteine.

Belongs to the G-protein coupled receptor 1 family.

It localises to the cell membrane. Functionally, receptor for neuropeptide Y and peptide YY. This Xenopus laevis (African clawed frog) protein is Neuropeptide Y receptor type 1 (npy1r).